The following is a 1345-amino-acid chain: Membrane-anchored lipid-binding protein LAM4 (1345 aa).

The Cytoplasmic portion of the chain corresponds to methionine 1–lysine 1197. Disordered stretches follow at residues arginine 51–alanine 80, serine 115–serine 134, glutamate 139–aspartate 164, aspartate 190–aspartate 302, leucine 356–arginine 397, serine 425–methionine 447, and serine 489–glutamine 531. The residue at position 66 (threonine 66) is a Phosphothreonine. The span at serine 216–threonine 228 shows a compositional bias: low complexity. The segment covering serine 246 to serine 271 has biased composition (polar residues). The segment covering histidine 283–serine 294 has biased composition (low complexity). The segment covering serine 425–aspartate 436 has biased composition (polar residues). A compositionally biased stretch (low complexity) spans serine 498–serine 516. The GRAM domain occupies glutamate 549–arginine 616. The span at serine 665–isoleucine 677 shows a compositional bias: low complexity. Positions serine 665–glutamate 722 are disordered. Residues serine 678–tyrosine 700 are compositionally biased toward acidic residues. Serine 747 bears the Phosphoserine mark. VASt domains are found at residues asparagine 758–alanine 930 and aspartate 967–lysine 1139. The interval alanine 930 to glutamine 963 is disordered. The span at lysine 1141–histidine 1158 shows a compositional bias: basic residues. The interval lysine 1141 to aspartate 1172 is disordered. A compositionally biased stretch (basic and acidic residues) spans serine 1159–aspartate 1172. Residues leucine 1198–proline 1218 traverse the membrane as a helical segment. The Lumenal portion of the chain corresponds to arginine 1219–serine 1345.

It belongs to the YSP2 family.

It is found in the endoplasmic reticulum membrane. May be involved in sterol transfer between intracellular membranes. The polypeptide is Membrane-anchored lipid-binding protein LAM4 (Saccharomyces cerevisiae (strain ATCC 204508 / S288c) (Baker's yeast)).